The following is a 394-amino-acid chain: Ribulose bisphosphate carboxylase large chain (394 aa).

Lysine 5 is subject to N6,N6,N6-trimethyllysine. Residues asparagine 114 and threonine 164 each coordinate substrate. Residue lysine 166 is the Proton acceptor of the active site. Lysine 168 contacts substrate. Positions 192, 194, and 195 each coordinate Mg(2+). Lysine 192 is modified (N6-carboxylysine). Histidine 285 acts as the Proton acceptor in catalysis. The substrate site is built by arginine 286, histidine 318, and serine 370.

Belongs to the RuBisCO large chain family. Type I subfamily. In terms of assembly, heterohexadecamer of 8 large chains and 8 small chains; disulfide-linked. The disulfide link is formed within the large subunit homodimers. Mg(2+) serves as cofactor. Post-translationally, the disulfide bond which can form in the large chain dimeric partners within the hexadecamer appears to be associated with oxidative stress and protein turnover.

The protein localises to the plastid. It localises to the chloroplast. It carries out the reaction 2 (2R)-3-phosphoglycerate + 2 H(+) = D-ribulose 1,5-bisphosphate + CO2 + H2O. It catalyses the reaction D-ribulose 1,5-bisphosphate + O2 = 2-phosphoglycolate + (2R)-3-phosphoglycerate + 2 H(+). Functionally, ruBisCO catalyzes two reactions: the carboxylation of D-ribulose 1,5-bisphosphate, the primary event in carbon dioxide fixation, as well as the oxidative fragmentation of the pentose substrate in the photorespiration process. Both reactions occur simultaneously and in competition at the same active site. In Alisma plantago-aquatica (Common water-plantain), this protein is Ribulose bisphosphate carboxylase large chain (rbcL).